A 332-amino-acid chain; its full sequence is Holliday junction branch migration complex subunit RuvB (332 aa).

The segment at 1-181 (MSRILDNEIM…FGITGHMEYY (181 aa)) is large ATPase domain (RuvB-L). ATP contacts are provided by residues leucine 20, arginine 21, glycine 62, lysine 65, threonine 66, threonine 67, 128–130 (EDF), arginine 171, tyrosine 181, and arginine 218. Threonine 66 provides a ligand contact to Mg(2+). The interval 182–252 (AHADLTEIVE…ITDKALTMLD (71 aa)) is small ATPAse domain (RuvB-S). Residues 255–332 (HEGLDYVDQK…EHLGYEYNEK (78 aa)) are head domain (RuvB-H). Residues arginine 291, arginine 310, arginine 312, and arginine 315 each coordinate DNA.

Belongs to the RuvB family. Homohexamer. Forms an RuvA(8)-RuvB(12)-Holliday junction (HJ) complex. HJ DNA is sandwiched between 2 RuvA tetramers; dsDNA enters through RuvA and exits via RuvB. An RuvB hexamer assembles on each DNA strand where it exits the tetramer. Each RuvB hexamer is contacted by two RuvA subunits (via domain III) on 2 adjacent RuvB subunits; this complex drives branch migration. In the full resolvosome a probable DNA-RuvA(4)-RuvB(12)-RuvC(2) complex forms which resolves the HJ.

It is found in the cytoplasm. It catalyses the reaction ATP + H2O = ADP + phosphate + H(+). The RuvA-RuvB-RuvC complex processes Holliday junction (HJ) DNA during genetic recombination and DNA repair, while the RuvA-RuvB complex plays an important role in the rescue of blocked DNA replication forks via replication fork reversal (RFR). RuvA specifically binds to HJ cruciform DNA, conferring on it an open structure. The RuvB hexamer acts as an ATP-dependent pump, pulling dsDNA into and through the RuvAB complex. RuvB forms 2 homohexamers on either side of HJ DNA bound by 1 or 2 RuvA tetramers; 4 subunits per hexamer contact DNA at a time. Coordinated motions by a converter formed by DNA-disengaged RuvB subunits stimulates ATP hydrolysis and nucleotide exchange. Immobilization of the converter enables RuvB to convert the ATP-contained energy into a lever motion, pulling 2 nucleotides of DNA out of the RuvA tetramer per ATP hydrolyzed, thus driving DNA branch migration. The RuvB motors rotate together with the DNA substrate, which together with the progressing nucleotide cycle form the mechanistic basis for DNA recombination by continuous HJ branch migration. Branch migration allows RuvC to scan DNA until it finds its consensus sequence, where it cleaves and resolves cruciform DNA. This Streptococcus pneumoniae (strain CGSP14) protein is Holliday junction branch migration complex subunit RuvB.